The following is a 350-amino-acid chain: Protein RecA (350 aa).

An ATP-binding site is contributed by 68–75 (GPESSGKT).

The protein belongs to the RecA family.

It localises to the cytoplasm. Functionally, can catalyze the hydrolysis of ATP in the presence of single-stranded DNA, the ATP-dependent uptake of single-stranded DNA by duplex DNA, and the ATP-dependent hybridization of homologous single-stranded DNAs. It interacts with LexA causing its activation and leading to its autocatalytic cleavage. This is Protein RecA from Mycolicibacterium vanbaalenii (strain DSM 7251 / JCM 13017 / BCRC 16820 / KCTC 9966 / NRRL B-24157 / PYR-1) (Mycobacterium vanbaalenii).